Reading from the N-terminus, the 26-residue chain is uncharacterized protein (26 aa).

It is found in the plastid. The protein resides in the chloroplast. This is an uncharacterized protein from Trieres chinensis (Marine centric diatom).